An 890-amino-acid polypeptide reads, in one-letter code: DNA mismatch repair protein MutS (890 aa).

Residue 645–652 participates in ATP binding; it reads GPNMAGKS.

The protein belongs to the DNA mismatch repair MutS family.

Functionally, this protein is involved in the repair of mismatches in DNA. It is possible that it carries out the mismatch recognition step. This protein has a weak ATPase activity. This chain is DNA mismatch repair protein MutS, found in Rickettsia rickettsii (strain Iowa).